The primary structure comprises 256 residues: Thiazole synthase (256 aa).

The active-site Schiff-base intermediate with DXP is the Lys-95. 1-deoxy-D-xylulose 5-phosphate is bound by residues Gly-156, 182–183, and 204–205; these read AG and NT.

This sequence belongs to the ThiG family. Homotetramer. Forms heterodimers with either ThiH or ThiS.

It is found in the cytoplasm. The enzyme catalyses [ThiS sulfur-carrier protein]-C-terminal-Gly-aminoethanethioate + 2-iminoacetate + 1-deoxy-D-xylulose 5-phosphate = [ThiS sulfur-carrier protein]-C-terminal Gly-Gly + 2-[(2R,5Z)-2-carboxy-4-methylthiazol-5(2H)-ylidene]ethyl phosphate + 2 H2O + H(+). It functions in the pathway cofactor biosynthesis; thiamine diphosphate biosynthesis. Functionally, catalyzes the rearrangement of 1-deoxy-D-xylulose 5-phosphate (DXP) to produce the thiazole phosphate moiety of thiamine. Sulfur is provided by the thiocarboxylate moiety of the carrier protein ThiS. In vitro, sulfur can be provided by H(2)S. This Klebsiella pneumoniae (strain 342) protein is Thiazole synthase.